The primary structure comprises 488 residues: 26S proteasome non-ATPase regulatory subunit 3 homolog A (488 aa).

Positions Cys240 to Asp421 constitute a PCI domain. Residues Arg451–Phe488 are disordered. Over residues Thr456–Ala481 the composition is skewed to basic and acidic residues.

This sequence belongs to the proteasome subunit S3 family. In terms of assembly, component of the 19S regulatory particle (RP/PA700) lid subcomplex of the 26S proteasome. The 26S proteasome is composed of a core protease (CP), known as the 20S proteasome, capped at one or both ends by the 19S regulatory particle (RP/PA700). The RP/PA700 complex is composed of at least 17 different subunits in two subcomplexes, the base and the lid, which form the portions proximal and distal to the 20S proteolytic core, respectively. Interacts with UCH1 and UCH2. In terms of tissue distribution, ubiquitous with highest expression in flowers.

Functionally, acts as a regulatory subunit of the 26 proteasome which is involved in the ATP-dependent degradation of ubiquitinated proteins. This Arabidopsis thaliana (Mouse-ear cress) protein is 26S proteasome non-ATPase regulatory subunit 3 homolog A.